We begin with the raw amino-acid sequence, 398 residues long: Minor capsid protein (398 aa).

Positions 359–398 (EEASVTSTEETLTPAQEAARTRAANKARKEAELAAATAEQ) are disordered. Over residues 362–372 (SVTSTEETLTP) the composition is skewed to polar residues. Residues 373–382 (AQEAARTRAA) are compositionally biased toward low complexity.

Belongs to the T7virus minor capsid protein family. In terms of assembly, interacts with the connector protein and the major capsid protein.

The protein localises to the virion. Assembles with the major capsid protein to form an icosahedral capsid with a T=7 symmetry, about 60 nm in diameter, and consisting of 415 capsid proteins. The major and minor capsid proteins are incorporated into the capsid in about a 90/10 ratio respectively. Once the capsid formed, encapsidates one single copy of the viral genome. In Escherichia coli (Bacteriophage T7), this protein is Minor capsid protein.